We begin with the raw amino-acid sequence, 545 residues long: Chaperonin GroEL 2 (545 aa).

ATP is bound by residues threonine 29–proline 32, aspartate 86–threonine 90, glycine 413, asparagine 479–alanine 481, and aspartate 495.

This sequence belongs to the chaperonin (HSP60) family. As to quaternary structure, forms a cylinder of 14 subunits composed of two heptameric rings stacked back-to-back. Interacts with the co-chaperonin GroES.

It is found in the cytoplasm. It catalyses the reaction ATP + H2O + a folded polypeptide = ADP + phosphate + an unfolded polypeptide.. Its function is as follows. Together with its co-chaperonin GroES, plays an essential role in assisting protein folding. The GroEL-GroES system forms a nano-cage that allows encapsulation of the non-native substrate proteins and provides a physical environment optimized to promote and accelerate protein folding. This chain is Chaperonin GroEL 2, found in Prochlorococcus marinus (strain MIT 9215).